A 157-amino-acid chain; its full sequence is ADP-ribosylation factor-like protein 2-binding protein (157 aa).

Belongs to the ARL2BP family.

Its subcellular location is the cytoplasm. The protein resides in the mitochondrion intermembrane space. It localises to the cytoskeleton. It is found in the microtubule organizing center. The protein localises to the centrosome. Its subcellular location is the nucleus. The protein resides in the spindle. It localises to the cilium basal body. In terms of biological role, plays a role as an effector of the ADP-ribosylation factor-like protein 2, ARL2. This is ADP-ribosylation factor-like protein 2-binding protein (arl2bp) from Xenopus tropicalis (Western clawed frog).